A 338-amino-acid polypeptide reads, in one-letter code: Malate dehydrogenase, mitochondrial (338 aa).

The transit peptide at M1–N24 directs the protein to the mitochondrion. NAD(+) is bound by residues G31 to G37 and D57. S33 carries an O-linked (GlcNAc) serine glycan. N6-acetyllysine; alternate occurs at positions 78 and 91. N6-succinyllysine; alternate is present on residues K78 and K91. 2 residues coordinate substrate: R104 and R110. Residues N117 and I140 to N142 contribute to the NAD(+) site. Residue N142 coordinates substrate. K165 carries the post-translational modification N6-acetyllysine. Residue R176 participates in substrate binding. Residue K185 is modified to N6-acetyllysine; alternate. K185 carries the post-translational modification N6-succinyllysine; alternate. H200 (proton acceptor) is an active-site residue. Position 203 is an N6-succinyllysine (K203). Residues K215 and K239 each carry the N6-acetyllysine; alternate modification. An N6-succinyllysine; alternate mark is found at K215 and K239. N6-malonyllysine; alternate is present on K239. S246 bears the Phosphoserine mark. M251 contributes to the NAD(+) binding site. N6-succinyllysine is present on K269. Residues K296, K301, K307, K314, and K324 each carry the N6-acetyllysine; alternate modification. 5 positions are modified to N6-succinyllysine; alternate: K296, K301, K307, K314, and K324. K307 carries the N6-malonyllysine; alternate modification. At S326 the chain carries Phosphoserine. K328, K329, and K335 each carry N6-acetyllysine; alternate. K328 carries the post-translational modification N6-succinyllysine; alternate. N6-malonyllysine; alternate is present on K329. N6-succinyllysine; alternate is present on K335.

This sequence belongs to the LDH/MDH superfamily. MDH type 1 family. Homodimer. In terms of processing, acetylation is enhanced after treatment either with trichostin A (TCA) or with nicotinamide (NAM) with the appearance of tri- and tetraacetylations. Glucose also increases acetylation. Expressed in flagella of epididymal sperm.

The protein localises to the mitochondrion matrix. The catalysed reaction is (S)-malate + NAD(+) = oxaloacetate + NADH + H(+). Its activity is regulated as follows. Enzyme activity is enhanced by acetylation. The polypeptide is Malate dehydrogenase, mitochondrial (Mdh2) (Rattus norvegicus (Rat)).